The sequence spans 150 residues: Putative F-box protein At2g33655 (150 aa).

Positions 1–47 (MEKMSDLPRELVEEILSRVPVKSMREVRVTCKTWNALSKHISKAEAA) constitute an F-box domain.

The polypeptide is Putative F-box protein At2g33655 (Arabidopsis thaliana (Mouse-ear cress)).